Here is a 428-residue protein sequence, read N- to C-terminus: MKNWKTLLLGIAMIANTSFAAPQVVDKVAAIVNNGVVLESDVDGLMQSVKLNAGQAGQQLPDDATLRHQILERLIMDQIILQMGQKMGVKITDEQLDQAIANIAKQNNMTMDQMRSRLAYDGLNYSTYRNQIRKEMIISEVRNNEVRRRITVLPQEVDALAKQIGTQNDASTELNLRHILIALPENPTSEQVNDAQRQAESIVEEARNGADFGKLAITYSADQQALKGGQMGWGRIQELPGIFAQALSTAKKGDIVGPIRSGVGFHILKVNDLRGQSQSISVTEVHARHILLKPSPIMNDQQARLKLEEIAADIKSGKTTFAAAAKEYSQDPGSANQGGDLGWATPDIFDPAFRDALTKLHKGQISAPVHSSFGWHLIELLDTRKVDKTDAAQKDRAYRMLMNRKFSEEAATWMQEQRASAYVKILSN.

Positions 1 to 20 (MKNWKTLLLGIAMIANTSFA) are cleaved as a signal peptide. PpiC domains lie at 171–272 (STEL…KVND) and 282–382 (VTEV…ELLD).

It is found in the periplasm. The catalysed reaction is [protein]-peptidylproline (omega=180) = [protein]-peptidylproline (omega=0). In terms of biological role, chaperone involved in the correct folding and assembly of outer membrane proteins. Recognizes specific patterns of aromatic residues and the orientation of their side chains, which are found more frequently in integral outer membrane proteins. May act in both early periplasmic and late outer membrane-associated steps of protein maturation. The polypeptide is Chaperone SurA (Salmonella choleraesuis (strain SC-B67)).